The sequence spans 562 residues: Arginine--tRNA ligase (562 aa).

The 'HIGH' region motif lies at 129–139 (ANPTGPLHVGH).

Belongs to the class-I aminoacyl-tRNA synthetase family. Monomer.

The protein localises to the cytoplasm. It carries out the reaction tRNA(Arg) + L-arginine + ATP = L-arginyl-tRNA(Arg) + AMP + diphosphate. In Xanthomonas oryzae pv. oryzae (strain MAFF 311018), this protein is Arginine--tRNA ligase.